A 530-amino-acid chain; its full sequence is MSIDTYTETLKINQLIEKATSHFQLSSTQLYKKILKNHEGELTELGAINVKTGKYTGRSPKDKFIVTEPSYKDNINWGDINQPMDEETFLKLYNKVLDYLNQKEELYIFSGYAGSDKESRLKLKVINELAWHNLFARNMFIRPESIDEAQNIKPNFTIVSAPHFKANPKLDGTHSETFVIISFKHKVILIGGTEYAGEMKKGIFSVMNYLLPMQDIMSMHCSANVGEKGDVALFFGLSGTGKTTLSADPKRKLIGDDEHGWNKNGVFNIEGGCYAKAIHLSKQKEPQIYNAIKYGTILENTVTNDDGTIDFDDNTYTENTRAAYPIDYIENIVTPSKAAHPNTIIFLTADAFGVIPPISKLTKDQAMYHFLSGFTSKLAGTERGVTEPQPSFSTCFGAPFLPLSPTKYADLLGNLIDIHDVDVYLVNTGWTGGKYGIGRRISLHYTREMVDQAISGKLKNTKYIKDDTFGLNIPVQIDSVPTTILNPINAWNNKDNYKAQAYDLIQRFNNNFKKFGKEVEHIANKGAFNQ.

3 residues coordinate substrate: Arg58, Tyr195, and Lys201. Residues Lys201, His220, and 236–244 contribute to the ATP site; that span reads GLSGTGKTT. 2 residues coordinate Mn(2+): Lys201 and His220. Asp257 lines the Mn(2+) pocket. ATP contacts are provided by residues Glu285, Arg321, 440–441, and Thr446; that span reads RI. A substrate-binding site is contributed by Arg321.

The protein belongs to the phosphoenolpyruvate carboxykinase (ATP) family. Requires Mn(2+) as cofactor.

The protein localises to the cytoplasm. The catalysed reaction is oxaloacetate + ATP = phosphoenolpyruvate + ADP + CO2. Its pathway is carbohydrate biosynthesis; gluconeogenesis. Its function is as follows. Involved in the gluconeogenesis. Catalyzes the conversion of oxaloacetate (OAA) to phosphoenolpyruvate (PEP) through direct phosphoryl transfer between the nucleoside triphosphate and OAA. The protein is Phosphoenolpyruvate carboxykinase (ATP) of Staphylococcus epidermidis (strain ATCC 12228 / FDA PCI 1200).